A 316-amino-acid chain; its full sequence is MGVHPQLNKNGELQHLLTTEGLPAVILRHILDTAESFTGVTERDVKKIPLLRGKSVFNLFFEPSTRTRTTFEIAAKRLSADVINLNMAVSSQTKGETLLDTVDNLSAMHADMFIVRHNQSGAAHLIARHVRPEIHVINAGDGWHAHPTQALLDMFTIRRYKQDFHALRVAIIGDILHSRVARSQIHALTTLGVPEIRVIAPKTLLPAKVERLGVHVYHNMVQGLQDVDVLMMLRLQHERMESAHLPSTEEYFKYYGLTPEKLALARSDAIVMHPGPMNRGVEIDSEVADGTQSVILPQVNFGIAVRMAVMSILAGN.

Carbamoyl phosphate contacts are provided by arginine 66 and threonine 67. Lysine 94 contributes to the L-aspartate binding site. 3 residues coordinate carbamoyl phosphate: arginine 116, histidine 146, and glutamine 149. 2 residues coordinate L-aspartate: arginine 179 and arginine 234. Residues glycine 275 and proline 276 each coordinate carbamoyl phosphate.

Belongs to the aspartate/ornithine carbamoyltransferase superfamily. ATCase family. Heterododecamer (2C3:3R2) of six catalytic PyrB chains organized as two trimers (C3), and six regulatory PyrI chains organized as three dimers (R2).

It carries out the reaction carbamoyl phosphate + L-aspartate = N-carbamoyl-L-aspartate + phosphate + H(+). It functions in the pathway pyrimidine metabolism; UMP biosynthesis via de novo pathway; (S)-dihydroorotate from bicarbonate: step 2/3. Catalyzes the condensation of carbamoyl phosphate and aspartate to form carbamoyl aspartate and inorganic phosphate, the committed step in the de novo pyrimidine nucleotide biosynthesis pathway. The sequence is that of Aspartate carbamoyltransferase catalytic subunit from Nitrosomonas europaea (strain ATCC 19718 / CIP 103999 / KCTC 2705 / NBRC 14298).